A 283-amino-acid polypeptide reads, in one-letter code: Polyprenyl-phosphate transporter (283 aa).

The next 9 membrane-spanning stretches (helical) occupy residues 27-47 (GTIA…SGIF), 51-71 (FWPS…AMGS), 85-105 (IPTM…LLKI), 112-132 (FTTK…VITL), 148-168 (TSLI…MLLP), 169-189 (GISG…MLAI), 197-217 (FAGL…FIIS), 230-250 (LMTF…VFPG), and 255-275 (IVMW…SLTL).

Belongs to the PopT family.

The protein resides in the cell membrane. With respect to regulation, active in alkaline conditions. In terms of biological role, flippase that catalyzes the transport of undecaprenyl phosphate (UndP) across the cytoplasmic membrane, from the external side to the cytoplasmic side. Is involved in UndP recycling during peptidoglycan synthesis. Necessary for peptidoglycan maintenance. In Staphylococcus aureus (strain NCTC 8325 / PS 47), this protein is Polyprenyl-phosphate transporter.